We begin with the raw amino-acid sequence, 370 residues long: DNA repair protein RAD51 homolog 2 (370 aa).

An ATP-binding site is contributed by 109–116 (GPPGIGKS).

It belongs to the RecA family. RAD51 subfamily. As to expression, preferentially expressed in flower buds and roots.

It is found in the nucleus. Functionally, may be involved in the homologous recombination repair (HRR) pathway of double-stranded DNA breaks arising during DNA replication or induced by DNA-damaging agents. In Arabidopsis thaliana (Mouse-ear cress), this protein is DNA repair protein RAD51 homolog 2 (RAD51B).